Consider the following 883-residue polypeptide: Phosphoenolpyruvate carboxylase (883 aa).

Active-site residues include His138 and Lys546.

The protein belongs to the PEPCase type 1 family. The cofactor is Mg(2+).

The catalysed reaction is oxaloacetate + phosphate = phosphoenolpyruvate + hydrogencarbonate. Functionally, forms oxaloacetate, a four-carbon dicarboxylic acid source for the tricarboxylic acid cycle. This Salmonella gallinarum (strain 287/91 / NCTC 13346) protein is Phosphoenolpyruvate carboxylase.